The following is a 254-amino-acid chain: Indole-3-glycerol phosphate synthase (254 aa).

Belongs to the TrpC family.

It catalyses the reaction 1-(2-carboxyphenylamino)-1-deoxy-D-ribulose 5-phosphate + H(+) = (1S,2R)-1-C-(indol-3-yl)glycerol 3-phosphate + CO2 + H2O. It functions in the pathway amino-acid biosynthesis; L-tryptophan biosynthesis; L-tryptophan from chorismate: step 4/5. The polypeptide is Indole-3-glycerol phosphate synthase (Methanopyrus kandleri (strain AV19 / DSM 6324 / JCM 9639 / NBRC 100938)).